We begin with the raw amino-acid sequence, 321 residues long: Acetyl-coenzyme A carboxylase carboxyl transferase subunit alpha (321 aa).

The CoA carboxyltransferase C-terminal domain maps to 39–293; that stretch reads RLEVKSQALT…KRALAEALRQ (255 aa).

Belongs to the AccA family. As to quaternary structure, acetyl-CoA carboxylase is a heterohexamer composed of biotin carboxyl carrier protein (AccB), biotin carboxylase (AccC) and two subunits each of ACCase subunit alpha (AccA) and ACCase subunit beta (AccD).

The protein resides in the cytoplasm. The enzyme catalyses N(6)-carboxybiotinyl-L-lysyl-[protein] + acetyl-CoA = N(6)-biotinyl-L-lysyl-[protein] + malonyl-CoA. It participates in lipid metabolism; malonyl-CoA biosynthesis; malonyl-CoA from acetyl-CoA: step 1/1. Functionally, component of the acetyl coenzyme A carboxylase (ACC) complex. First, biotin carboxylase catalyzes the carboxylation of biotin on its carrier protein (BCCP) and then the CO(2) group is transferred by the carboxyltransferase to acetyl-CoA to form malonyl-CoA. The sequence is that of Acetyl-coenzyme A carboxylase carboxyl transferase subunit alpha from Azoarcus sp. (strain BH72).